A 192-amino-acid polypeptide reads, in one-letter code: Leucyl/phenylalanyl-tRNA--protein transferase (192 aa).

It belongs to the L/F-transferase family.

The protein resides in the cytoplasm. The catalysed reaction is N-terminal L-lysyl-[protein] + L-leucyl-tRNA(Leu) = N-terminal L-leucyl-L-lysyl-[protein] + tRNA(Leu) + H(+). It carries out the reaction N-terminal L-arginyl-[protein] + L-leucyl-tRNA(Leu) = N-terminal L-leucyl-L-arginyl-[protein] + tRNA(Leu) + H(+). It catalyses the reaction L-phenylalanyl-tRNA(Phe) + an N-terminal L-alpha-aminoacyl-[protein] = an N-terminal L-phenylalanyl-L-alpha-aminoacyl-[protein] + tRNA(Phe). In terms of biological role, functions in the N-end rule pathway of protein degradation where it conjugates Leu, Phe and, less efficiently, Met from aminoacyl-tRNAs to the N-termini of proteins containing an N-terminal arginine or lysine. This is Leucyl/phenylalanyl-tRNA--protein transferase from Synechococcus sp. (strain JA-3-3Ab) (Cyanobacteria bacterium Yellowstone A-Prime).